A 233-amino-acid chain; its full sequence is Sugar fermentation stimulation protein homolog (233 aa).

Belongs to the SfsA family.

The sequence is that of Sugar fermentation stimulation protein homolog from Rhodospirillum centenum (strain ATCC 51521 / SW).